The chain runs to 448 residues: Bifunctional protein GlmU (448 aa).

The pyrophosphorylase stretch occupies residues 1–232 (MSERSLLVVV…VDEVAGVNSR (232 aa)). Residues 11 to 14 (LAAG), Lys-25, Gln-78, and 83 to 84 (GT) each bind UDP-N-acetyl-alpha-D-glucosamine. A Mg(2+)-binding site is contributed by Asp-108. UDP-N-acetyl-alpha-D-glucosamine-binding residues include Gly-144, Glu-158, Asn-173, and Asn-230. Asn-230 is a Mg(2+) binding site. The linker stretch occupies residues 233-253 (LQLAEAEAILQGRLRRAAMAG). The N-acetyltransferase stretch occupies residues 254–448 (GATLVAPETV…LRAARGKPKV (195 aa)). Positions 319 and 337 each coordinate UDP-N-acetyl-alpha-D-glucosamine. His-349 functions as the Proton acceptor in the catalytic mechanism. 2 residues coordinate UDP-N-acetyl-alpha-D-glucosamine: Tyr-352 and Asn-363. Acetyl-CoA contacts are provided by residues Ala-366, 372–373 (NY), Ser-409, and Arg-426.

In the N-terminal section; belongs to the N-acetylglucosamine-1-phosphate uridyltransferase family. The protein in the C-terminal section; belongs to the transferase hexapeptide repeat family. As to quaternary structure, homotrimer. Mg(2+) is required as a cofactor.

The protein resides in the cytoplasm. It catalyses the reaction alpha-D-glucosamine 1-phosphate + acetyl-CoA = N-acetyl-alpha-D-glucosamine 1-phosphate + CoA + H(+). It carries out the reaction N-acetyl-alpha-D-glucosamine 1-phosphate + UTP + H(+) = UDP-N-acetyl-alpha-D-glucosamine + diphosphate. Its pathway is nucleotide-sugar biosynthesis; UDP-N-acetyl-alpha-D-glucosamine biosynthesis; N-acetyl-alpha-D-glucosamine 1-phosphate from alpha-D-glucosamine 6-phosphate (route II): step 2/2. The protein operates within nucleotide-sugar biosynthesis; UDP-N-acetyl-alpha-D-glucosamine biosynthesis; UDP-N-acetyl-alpha-D-glucosamine from N-acetyl-alpha-D-glucosamine 1-phosphate: step 1/1. It functions in the pathway bacterial outer membrane biogenesis; LPS lipid A biosynthesis. Catalyzes the last two sequential reactions in the de novo biosynthetic pathway for UDP-N-acetylglucosamine (UDP-GlcNAc). The C-terminal domain catalyzes the transfer of acetyl group from acetyl coenzyme A to glucosamine-1-phosphate (GlcN-1-P) to produce N-acetylglucosamine-1-phosphate (GlcNAc-1-P), which is converted into UDP-GlcNAc by the transfer of uridine 5-monophosphate (from uridine 5-triphosphate), a reaction catalyzed by the N-terminal domain. The chain is Bifunctional protein GlmU from Azorhizobium caulinodans (strain ATCC 43989 / DSM 5975 / JCM 20966 / LMG 6465 / NBRC 14845 / NCIMB 13405 / ORS 571).